The following is a 266-amino-acid chain: Interleukin-1 beta (266 aa).

Positions Met1 to Asp113 are excised as a propeptide.

It belongs to the IL-1 family. As to quaternary structure, monomer. In its precursor form, weakly interacts with full-length MEFV; the mature cytokine does not interact at all. Interacts with integrins ITGAV:ITGBV and ITGA5:ITGB1; integrin-binding is required for IL1B signaling. Interacts with cargo receptor TMED10; the interaction is direct and is required for the secretion of IL1B mature form. Interacts with HSP90AB1; the interaction facilitates cargo translocation into the ERGIC. Interacts with HSP90B1; the interaction facilitates cargo translocation into the ERGIC.

The protein localises to the cytoplasm. The protein resides in the cytosol. Its subcellular location is the secreted. It is found in the lysosome. It localises to the extracellular exosome. In terms of biological role, potent pro-inflammatory cytokine. Initially discovered as the major endogenous pyrogen, induces prostaglandin synthesis, neutrophil influx and activation, T-cell activation and cytokine production, B-cell activation and antibody production, and fibroblast proliferation and collagen production. Promotes Th17 differentiation of T-cells. Synergizes with IL12/interleukin-12 to induce IFNG synthesis from T-helper 1 (Th1) cells. Plays a role in angiogenesis by inducing VEGF production synergistically with TNF and IL6. Involved in transduction of inflammation downstream of pyroptosis: its mature form is specifically released in the extracellular milieu by passing through the gasdermin-D (GSDMD) pore. The chain is Interleukin-1 beta (IL1B) from Cervus elaphus (Red deer).